Reading from the N-terminus, the 338-residue chain is Putative transport protein TM_1349 (338 aa).

7 consecutive transmembrane segments (helical) span residues 20–40 (ILIS…IVLM), 68–88 (ALLL…PPVF), 147–167 (VSVT…VFYI), 203–223 (VIFI…EAFN), 239–259 (FIPI…SLTL), 263–283 (GVLL…VVFI), and 297–317 (IILS…FVGV).

This sequence belongs to the autoinducer-2 exporter (AI-2E) (TC 2.A.86) family.

Its subcellular location is the cell membrane. In Thermotoga maritima (strain ATCC 43589 / DSM 3109 / JCM 10099 / NBRC 100826 / MSB8), this protein is Putative transport protein TM_1349.